An 859-amino-acid chain; its full sequence is Leucine--tRNA ligase (859 aa).

Residues 42 to 52 carry the 'HIGH' region motif; the sequence is PYPSGRLHMGH. The 'KMSKS' region motif lies at 618–622; the sequence is KMSKS. K621 contacts ATP.

Belongs to the class-I aminoacyl-tRNA synthetase family.

It localises to the cytoplasm. It carries out the reaction tRNA(Leu) + L-leucine + ATP = L-leucyl-tRNA(Leu) + AMP + diphosphate. In Shewanella sp. (strain MR-7), this protein is Leucine--tRNA ligase.